The following is a 243-amino-acid chain: Probable enoyl-CoA hydratase echA6 (243 aa).

This sequence belongs to the enoyl-CoA hydratase/isomerase family.

It catalyses the reaction a (3S)-3-hydroxyacyl-CoA = a (2E)-enoyl-CoA + H2O. It carries out the reaction a 4-saturated-(3S)-3-hydroxyacyl-CoA = a (3E)-enoyl-CoA + H2O. Could possibly oxidize fatty acids using specific components. In Mycobacterium bovis (strain ATCC BAA-935 / AF2122/97), this protein is Probable enoyl-CoA hydratase echA6 (echA6).